The primary structure comprises 1188 residues: uncharacterized protein (1188 aa).

3 consecutive transmembrane segments (helical) span residues 73 to 93 (FVVNYATVPMFMSASFCHLLM), 878 to 898 (IFSVFIYYECNLVLFSGDSGI), and 1089 to 1109 (VIPLFLLCGTEGQIYIISEFI).

It localises to the membrane. This is an uncharacterized protein from Saccharomyces cerevisiae (strain ATCC 204508 / S288c) (Baker's yeast).